Consider the following 282-residue polypeptide: MKVKVISVLEDNYMYLVIEESTRDAVAVDAAVPKRLLEIVRKEDVVLRAVLITHHHWDHARGNEELVRLCPGLRVYGADERIGALTHRVAPDEELTFGAIRVRCLFTPCHTKGHMCYFMWEDGSLDAPALFSGDTLFVGGCGQFLEGTAEQMYTNLTQVLGDLPKETKVFCGHECTVRNLKFALKVEPENEAVKKKLAWARQRDDEDLPTVPSTLQEEFLYNPFLRVTEEAVQKFTGRKEPVEVLRALRTEKDNFKKPKERPHPQAMLAFDWGLFAPFLEKK.

Zn(2+) is bound by residues histidine 54, histidine 56, aspartate 58, histidine 59, histidine 110, aspartate 134, and histidine 173.

The protein belongs to the metallo-beta-lactamase superfamily. Glyoxalase II family. The cofactor is Zn(2+).

Functionally, hydrolase acting on ester bonds. This chain is Hydroxyacylglutathione hydrolase-like protein (HAGHL), found in Gallus gallus (Chicken).